We begin with the raw amino-acid sequence, 362 residues long: NAD(P)H-quinone oxidoreductase subunit 1, chloroplastic (362 aa).

8 consecutive transmembrane segments (helical) span residues 31 to 51 (WVPL…LVIV), 99 to 119 (WLFT…YLVV), 132 to 152 (IGIF…LMSG), 178 to 198 (LAIC…VDIV), 206 to 226 (ILTW…IAAL), 268 to 288 (LVSG…PFAI), 303 to 323 (AFLG…AAIL), and 336 to 356 (LLDL…LLTA).

It belongs to the complex I subunit 1 family. As to quaternary structure, NDH is composed of at least 16 different subunits, 5 of which are encoded in the nucleus.

The protein resides in the plastid. Its subcellular location is the chloroplast thylakoid membrane. It carries out the reaction a plastoquinone + NADH + (n+1) H(+)(in) = a plastoquinol + NAD(+) + n H(+)(out). It catalyses the reaction a plastoquinone + NADPH + (n+1) H(+)(in) = a plastoquinol + NADP(+) + n H(+)(out). NDH shuttles electrons from NAD(P)H:plastoquinone, via FMN and iron-sulfur (Fe-S) centers, to quinones in the photosynthetic chain and possibly in a chloroplast respiratory chain. The immediate electron acceptor for the enzyme in this species is believed to be plastoquinone. Couples the redox reaction to proton translocation, and thus conserves the redox energy in a proton gradient. This is NAD(P)H-quinone oxidoreductase subunit 1, chloroplastic from Nephroselmis olivacea (Green alga).